The chain runs to 683 residues: DNA ligase (683 aa).

NAD(+) is bound by residues Asp35–Asp39, Ser84–Leu85, and Glu116. The active-site N6-AMP-lysine intermediate is Lys118. NAD(+) is bound by residues Arg139, Glu176, Lys293, and Lys317. Positions 419, 422, 437, and 443 each coordinate Zn(2+). The 82-residue stretch at Ala602 to Glu683 folds into the BRCT domain.

It belongs to the NAD-dependent DNA ligase family. LigA subfamily. The cofactor is Mg(2+). It depends on Mn(2+) as a cofactor.

The enzyme catalyses NAD(+) + (deoxyribonucleotide)n-3'-hydroxyl + 5'-phospho-(deoxyribonucleotide)m = (deoxyribonucleotide)n+m + AMP + beta-nicotinamide D-nucleotide.. In terms of biological role, DNA ligase that catalyzes the formation of phosphodiester linkages between 5'-phosphoryl and 3'-hydroxyl groups in double-stranded DNA using NAD as a coenzyme and as the energy source for the reaction. It is essential for DNA replication and repair of damaged DNA. The polypeptide is DNA ligase (Dechloromonas aromatica (strain RCB)).